A 332-amino-acid polypeptide reads, in one-letter code: Receptor polysaccharide phosphotransferase WefC (332 aa).

The protein belongs to the stealth family.

This Streptococcus oralis protein is Receptor polysaccharide phosphotransferase WefC (wefC).